The chain runs to 386 residues: Succinate--CoA ligase [ADP-forming] subunit beta (386 aa).

Positions 9-244 (KDLLTAYQLP…PSQENIRDVL (236 aa)) constitute an ATP-grasp domain. ATP-binding positions include K46, 53–55 (GRG), V102, and E107. Mg(2+) contacts are provided by N199 and D213. Substrate contacts are provided by residues N264 and 321-323 (GIM).

This sequence belongs to the succinate/malate CoA ligase beta subunit family. As to quaternary structure, heterotetramer of two alpha and two beta subunits. Mg(2+) serves as cofactor.

It carries out the reaction succinate + ATP + CoA = succinyl-CoA + ADP + phosphate. The enzyme catalyses GTP + succinate + CoA = succinyl-CoA + GDP + phosphate. Its pathway is carbohydrate metabolism; tricarboxylic acid cycle; succinate from succinyl-CoA (ligase route): step 1/1. In terms of biological role, succinyl-CoA synthetase functions in the citric acid cycle (TCA), coupling the hydrolysis of succinyl-CoA to the synthesis of either ATP or GTP and thus represents the only step of substrate-level phosphorylation in the TCA. The beta subunit provides nucleotide specificity of the enzyme and binds the substrate succinate, while the binding sites for coenzyme A and phosphate are found in the alpha subunit. This chain is Succinate--CoA ligase [ADP-forming] subunit beta, found in Chlamydia trachomatis serovar L2 (strain ATCC VR-902B / DSM 19102 / 434/Bu).